A 1206-amino-acid polypeptide reads, in one-letter code: uncharacterized protein (1206 aa).

Disordered stretches follow at residues 133 to 547, 568 to 837, and 859 to 1206; these read YDLD…PVDY, FASS…DQLL, and RQRA…KATS. Pro residues-rich tracts occupy residues 139 to 151 and 159 to 234; these read IPPP…PGPP and GESP…PPAP. Ser-255 bears the Phosphoserine mark. Residues 305–319 show a composition bias toward low complexity; sequence VRTSSIPVQEAPGAS. Over residues 351–363 the composition is skewed to basic and acidic residues; the sequence is RALEPEQPREPRP. The span at 384–413 shows a compositional bias: pro residues; sequence APPPAPPLPPPAPPLPPPAPSLPPAAPPLP. Over residues 414–436 the composition is skewed to low complexity; it reads STELAAPPSSGFMKTSKSNSPAL. Residues 454–467 show a composition bias toward basic and acidic residues; it reads VDWRDPRQMEKLRS. Residues 522-531 are compositionally biased toward low complexity; the sequence is PEKSPSSSSL. Residues 568–577 show a composition bias toward basic and acidic residues; the sequence is FASSAEKEAK. Low complexity predominate over residues 656 to 671; the sequence is LPKATPGLTLPLKPTP. Thr-680 carries the post-translational modification Phosphothreonine. Positions 732-747 are enriched in basic and acidic residues; that stretch reads AEKDLASVRQREKPET. A compositionally biased stretch (pro residues) spans 1001–1016; the sequence is IPPPPEFSNDPEPPAP. Over residues 1028 to 1041 the composition is skewed to polar residues; the sequence is PRNNFSDLGQSWGP. Residues Arg-1051, Arg-1083, and Arg-1094 each carry the omega-N-methylarginine modification. Positions 1170–1184 are enriched in polar residues; the sequence is PHGNTHYGSPINTFT.

This is an uncharacterized protein from Mus musculus (Mouse).